We begin with the raw amino-acid sequence, 412 residues long: Trehalose synthase (412 aa).

It belongs to the glycosyltransferase group 1 family. Glycosyltransferase 4 subfamily. As to quaternary structure, homodimer. The cofactor is Mg(2+).

It catalyses the reaction an NDP-alpha-D-glucose + D-glucose = alpha,alpha-trehalose + a ribonucleoside 5'-diphosphate + H(+). In terms of biological role, synthesizes trehalose from ADP-glucose and glucose. Has a much lower activity toward UDP-glucose and GDP-glucose. The reaction is reversible, the equilibrium strongly favors trehalose synthesis. In Pyrococcus furiosus (strain ATCC 43587 / DSM 3638 / JCM 8422 / Vc1), this protein is Trehalose synthase.